Consider the following 180-residue polypeptide: Ribulose bisphosphate carboxylase small subunit, chloroplastic 5 (180 aa).

A chloroplast-targeting transit peptide spans 1–56; it reads MASSVMSSAAVATRGNGAQASMVAPFTGLKSTASFPVSRKQNLDITSIASNGGRVR.

This sequence belongs to the RuBisCO small chain family. In terms of assembly, heterohexadecamer of 8 large and 8 small subunits.

It is found in the plastid. It localises to the chloroplast. In terms of biological role, ruBisCO catalyzes two reactions: the carboxylation of D-ribulose 1,5-bisphosphate, the primary event in carbon dioxide fixation, as well as the oxidative fragmentation of the pentose substrate. Both reactions occur simultaneously and in competition at the same active site. Although the small subunit is not catalytic it is essential for maximal activity. This Solanum tuberosum (Potato) protein is Ribulose bisphosphate carboxylase small subunit, chloroplastic 5.